The primary structure comprises 439 residues: Chitinase-like protein Idgf1 (439 aa).

Positions 1 to 20 (MRFQLFYILGLLSVTSLTQA) are cleaved as a signal peptide. Residues 22 to 439 (NNLVCYYDST…IVRSIKYFMG (418 aa)) enclose the GH18 domain. C26 and C53 are oxidised to a cystine. N122, N218, and N346 each carry an N-linked (GlcNAc...) asparagine glycan. A disulfide bond links C340 and C423.

It belongs to the glycosyl hydrolase 18 family. IDGF subfamily. Glycosylated.

It localises to the secreted. Cooperates with insulin-like peptides to stimulate the proliferation, polarization and motility of imaginal disk cells. May act by stabilizing the binding of insulin-like peptides to its receptor through a simultaneous interaction with both molecules to form a multiprotein signaling complex. This Drosophila simulans (Fruit fly) protein is Chitinase-like protein Idgf1 (Idgf1).